Reading from the N-terminus, the 108-residue chain is Putative DNA-directed RNA polymerase subunit 1 inactive homolog (108 aa).

The polypeptide is Putative DNA-directed RNA polymerase subunit 1 inactive homolog (Acanthamoeba polyphaga (Amoeba)).